Here is an 892-residue protein sequence, read N- to C-terminus: DNA mismatch repair protein MutS (892 aa).

Residue 607–614 (GPNMSGKS) coordinates ATP.

It belongs to the DNA mismatch repair MutS family.

This protein is involved in the repair of mismatches in DNA. It is possible that it carries out the mismatch recognition step. This protein has a weak ATPase activity. This is DNA mismatch repair protein MutS from Bacillus cereus (strain AH820).